A 91-amino-acid chain; its full sequence is Probable Fe(2+)-trafficking protein (91 aa).

Belongs to the Fe(2+)-trafficking protein family. Monomer.

Its function is as follows. Could be a mediator in iron transactions between iron acquisition and iron-requiring processes, such as synthesis and/or repair of Fe-S clusters in biosynthetic enzymes. This chain is Probable Fe(2+)-trafficking protein, found in Klebsiella pneumoniae (strain 342).